Consider the following 605-residue polypeptide: NADH-ubiquinone oxidoreductase chain 5 (605 aa).

Transmembrane regions (helical) follow at residues 11-31 (ILITELLILALSALMTMLPPI), 49-69 (LSLTSILIHILIEEPSSISSL), 77-97 (LAMSIKIDYYSLIFISIALFI), 120-140 (MFLLLFLMSMIMFIAANNFFP), 141-161 (MLVGWGTMGLMSYLLISWWHG), 178-198 (LADIGFILTFSWCITYMSSLD), 202-222 (FFATSTLVTGVPILGMLMAAM), 244-264 (VSALLHSSTMVTAGVYLLIGM), 273-295 (GFSEACLTMGAATALYASFKALL), 302-322 (IIAFSTLSQLGFMMATVGLNH), 325-345 (LAFMHLCMHAFFKAMMFLCAG), 371-391 (ASCFTLSTLALAGFPFLTGFF), 408-425 (LWATMLLISTMFTAIYSL), 457-477 (LALASIVTGSLFSLFTPPIYT), 488-508 (LAALTLTFMSAFLAMYLISLA), and 584-604 (IKTYFMAFLVTFVIILYIMLF).

Belongs to the complex I subunit 5 family.

The protein localises to the mitochondrion inner membrane. It catalyses the reaction a ubiquinone + NADH + 5 H(+)(in) = a ubiquinol + NAD(+) + 4 H(+)(out). Its function is as follows. Core subunit of the mitochondrial membrane respiratory chain NADH dehydrogenase (Complex I) that is believed to belong to the minimal assembly required for catalysis. Complex I functions in the transfer of electrons from NADH to the respiratory chain. The immediate electron acceptor for the enzyme is believed to be ubiquinone. This is NADH-ubiquinone oxidoreductase chain 5 (MT-ND5) from Pelomedusa subrufa (African side-necked turtle).